A 372-amino-acid polypeptide reads, in one-letter code: Alanine dehydrogenase 2 (372 aa).

The active site involves His95. 169–199 is a binding site for NAD(+); it reads KVTIIGGGQAGTNAAKIALGLGADVTILDVN.

The protein belongs to the AlaDH/PNT family.

It carries out the reaction L-alanine + NAD(+) + H2O = pyruvate + NH4(+) + NADH + H(+). It functions in the pathway amino-acid degradation; L-alanine degradation via dehydrogenase pathway; NH(3) and pyruvate from L-alanine: step 1/1. Functionally, may play a role in cell wall synthesis as L-alanine is an important constituent of the peptidoglycan layer. The protein is Alanine dehydrogenase 2 (ald2) of Staphylococcus aureus (strain Mu50 / ATCC 700699).